The primary structure comprises 417 residues: UDP-N-acetylglucosamine 1-carboxyvinyltransferase (417 aa).

22-23 (KN) lines the phosphoenolpyruvate pocket. Arg-93 serves as a coordination point for UDP-N-acetyl-alpha-D-glucosamine. The Proton donor role is filled by Cys-117. Cys-117 is subject to 2-(S-cysteinyl)pyruvic acid O-phosphothioketal. 2 residues coordinate UDP-N-acetyl-alpha-D-glucosamine: Asp-304 and Ile-326.

It belongs to the EPSP synthase family. MurA subfamily.

It is found in the cytoplasm. It catalyses the reaction phosphoenolpyruvate + UDP-N-acetyl-alpha-D-glucosamine = UDP-N-acetyl-3-O-(1-carboxyvinyl)-alpha-D-glucosamine + phosphate. It functions in the pathway cell wall biogenesis; peptidoglycan biosynthesis. Cell wall formation. Adds enolpyruvyl to UDP-N-acetylglucosamine. The polypeptide is UDP-N-acetylglucosamine 1-carboxyvinyltransferase (Neisseria gonorrhoeae (strain ATCC 700825 / FA 1090)).